Consider the following 227-residue polypeptide: MHAVLKKMKNKLVVSCQALEEEPLHSSFIMGRMALAAKQGGASGIRANSKEDILEIKSTVDLPVIGIVKRHYPGSDVYITATMTEVDELMEANVDMIAMDATKQKRPKQSLAEMVAAIRNQYPSVALMADVSTLEEAIEADRLGFDCISTTLVGYTAYTAGASASDNDFALLKEMVQAVKAPVIAEGKMNTPALAKCALKAGAHSVVVGGAITRPQQITKTFVEALQ.

It belongs to the NanE family.

It carries out the reaction an N-acyl-D-glucosamine 6-phosphate = an N-acyl-D-mannosamine 6-phosphate. Its pathway is amino-sugar metabolism; N-acetylneuraminate degradation; D-fructose 6-phosphate from N-acetylneuraminate: step 3/5. In terms of biological role, converts N-acetylmannosamine-6-phosphate (ManNAc-6-P) to N-acetylglucosamine-6-phosphate (GlcNAc-6-P). This Shouchella clausii (strain KSM-K16) (Alkalihalobacillus clausii) protein is Putative N-acetylmannosamine-6-phosphate 2-epimerase.